The following is a 317-amino-acid chain: Inositol oxygenase 4 (317 aa).

Substrate-binding positions include Arg58 and Asp115–Ser117. 3 residues coordinate Fe cation: His128, His153, and Asp154. Residues Lys157 and Gly174–Asp175 each bind substrate. Fe cation-binding residues include His226, His252, and Asp285. His252–Ser253 is a binding site for substrate.

It belongs to the myo-inositol oxygenase family. Requires Fe cation as cofactor. Expressed in flowers, leaves, siliques, and to a lesser extent in roots.

The protein resides in the cytoplasm. The enzyme catalyses myo-inositol + O2 = D-glucuronate + H2O + H(+). The protein operates within polyol metabolism; myo-inositol degradation into D-glucuronate; D-glucuronate from myo-inositol: step 1/1. Functionally, catalyzes the oxygenative cleavage of myo-inositol to D-glucuronate. Involved in the biosynthesis of UDP-glucuronic acid (UDP-GlcA), providing nucleotide sugars for cell-wall polymers. May be also involved in plant ascorbate biosynthesis. This chain is Inositol oxygenase 4 (MIOX4), found in Arabidopsis thaliana (Mouse-ear cress).